A 271-amino-acid polypeptide reads, in one-letter code: Putative phosphoenolpyruvate synthase regulatory protein (271 aa).

152–159 (GVSRCGKT) serves as a coordination point for ADP.

The protein belongs to the pyruvate, phosphate/water dikinase regulatory protein family. PSRP subfamily.

It catalyses the reaction [pyruvate, water dikinase] + ADP = [pyruvate, water dikinase]-phosphate + AMP + H(+). The catalysed reaction is [pyruvate, water dikinase]-phosphate + phosphate + H(+) = [pyruvate, water dikinase] + diphosphate. In terms of biological role, bifunctional serine/threonine kinase and phosphorylase involved in the regulation of the phosphoenolpyruvate synthase (PEPS) by catalyzing its phosphorylation/dephosphorylation. The polypeptide is Putative phosphoenolpyruvate synthase regulatory protein (Legionella pneumophila (strain Corby)).